Reading from the N-terminus, the 92-residue chain is Small ribosomal subunit protein bS18 (92 aa).

It belongs to the bacterial ribosomal protein bS18 family. Part of the 30S ribosomal subunit. Forms a tight heterodimer with protein bS6.

Its function is as follows. Binds as a heterodimer with protein bS6 to the central domain of the 16S rRNA, where it helps stabilize the platform of the 30S subunit. The sequence is that of Small ribosomal subunit protein bS18 from Cupriavidus necator (strain ATCC 17699 / DSM 428 / KCTC 22496 / NCIMB 10442 / H16 / Stanier 337) (Ralstonia eutropha).